The following is a 438-amino-acid chain: Mannan endo-1,4-beta-mannosidase F (438 aa).

The signal sequence occupies residues 1 to 17; the sequence is MHPLPSVALLSAIGAVA. Positions 19–54 constitute a CBM1 domain; the sequence is QVGPWGQCGGRSYTGETSCVSGWSCVLFNEWYSQCQ. The ser-rich linker stretch occupies residues 60–96; sequence STSSVSATAAPSSTSSSKESVPSATTSKKPVPTGSSS. Residues 61–86 are compositionally biased toward low complexity; that stretch reads TSSVSATAAPSSTSSSKESVPSATTS. The segment at 61–92 is disordered; the sequence is TSSVSATAAPSSTSSSKESVPSATTSKKPVPT. A catalytic region spans residues 97 to 438; sequence FVKADGLKFN…CGVADHLSTL (342 aa). Residues Trp-149 and Asn-263 each coordinate substrate. Catalysis depends on Glu-264, which acts as the Proton donor. N-linked (GlcNAc...) asparagine glycosylation occurs at Asn-277. Tyr-339 lines the substrate pocket. Glu-373 (nucleophile) is an active-site residue. Position 402 (Trp-402) interacts with substrate.

It belongs to the glycosyl hydrolase 5 (cellulase A) family.

The protein resides in the secreted. It catalyses the reaction Random hydrolysis of (1-&gt;4)-beta-D-mannosidic linkages in mannans, galactomannans and glucomannans.. Functionally, endo-1,4-mannanase, a crucial enzyme for depolymerization of seed galactomannans and wood galactoglucomannans. This is Mannan endo-1,4-beta-mannosidase F (manF) from Aspergillus fumigatus (strain ATCC MYA-4609 / CBS 101355 / FGSC A1100 / Af293) (Neosartorya fumigata).